The sequence spans 343 residues: Heat-inducible transcription repressor HrcA (343 aa).

Belongs to the HrcA family.

Its function is as follows. Negative regulator of class I heat shock genes (grpE-dnaK-dnaJ and groELS operons). Prevents heat-shock induction of these operons. The sequence is that of Heat-inducible transcription repressor HrcA from Mycobacterium avium (strain 104).